The chain runs to 80 residues: Peroxidase (80 aa).

The disordered stretch occupies residues 56-80 (DANEAEANSDLPGFNSSRSELEAAF). Proline 67 lines the substrate pocket. N-linked (GlcNAc...) asparagine glycosylation is present at asparagine 70.

This sequence belongs to the peroxidase family. Classical plant (class III) peroxidase subfamily. Ca(2+) serves as cofactor. The cofactor is heme b.

The enzyme catalyses 2 a phenolic donor + H2O2 = 2 a phenolic radical donor + 2 H2O. Functionally, removal of H(2)O(2), oxidation of toxic reductants, biosynthesis and degradation of lignin, suberization, auxin catabolism, response to environmental stresses such as wounding, pathogen attack and oxidative stress. These functions might be dependent on each isozyme/isoform in each plant tissue. This is Peroxidase from Triticum aestivum (Wheat).